A 95-amino-acid chain; its full sequence is Aspartyl/glutamyl-tRNA(Asn/Gln) amidotransferase subunit C (95 aa).

This sequence belongs to the GatC family. Heterotrimer of A, B and C subunits.

It catalyses the reaction L-glutamyl-tRNA(Gln) + L-glutamine + ATP + H2O = L-glutaminyl-tRNA(Gln) + L-glutamate + ADP + phosphate + H(+). The catalysed reaction is L-aspartyl-tRNA(Asn) + L-glutamine + ATP + H2O = L-asparaginyl-tRNA(Asn) + L-glutamate + ADP + phosphate + 2 H(+). In terms of biological role, allows the formation of correctly charged Asn-tRNA(Asn) or Gln-tRNA(Gln) through the transamidation of misacylated Asp-tRNA(Asn) or Glu-tRNA(Gln) in organisms which lack either or both of asparaginyl-tRNA or glutaminyl-tRNA synthetases. The reaction takes place in the presence of glutamine and ATP through an activated phospho-Asp-tRNA(Asn) or phospho-Glu-tRNA(Gln). In Campylobacter concisus (strain 13826), this protein is Aspartyl/glutamyl-tRNA(Asn/Gln) amidotransferase subunit C.